The following is a 305-amino-acid chain: Nuclear egress protein 1 (305 aa).

Positions 1 to 11 (MDRERPRKTRE) are enriched in basic and acidic residues. Positions 1–24 (MDRERPRKTREPASPGSVLSKRSK) are disordered. The CCCH-type zinc finger occupies 104 to 230 (CLVLSPLGHA…FALFKTDDLH (127 aa)).

The protein belongs to the herpesviridae NEC1 protein family. In terms of assembly, forms a heterohexameric complex with NEC2. Interacts with capsid vertex specific component 2/CVC2; this interaction directs the capsid to the host inner nuclear membrane to initiate budding. Phosphorylated at serine residues in the N-terminus. This phosphorylation regulates the localization within the inner nuclear membrane.

It localises to the host nucleus inner membrane. Functionally, plays an essential role in virion nuclear egress, the first step of virion release from infected cell. Within the host nucleus, NEC1 interacts with the newly formed capsid through the vertexes and directs it to the inner nuclear membrane by associating with NEC2. Induces the budding of the capsid at the inner nuclear membrane as well as its envelopment into the perinuclear space. There, the NEC1/NEC2 complex promotes the fusion of the enveloped capsid with the outer nuclear membrane and the subsequent release of the viral capsid into the cytoplasm where it will reach the secondary budding sites in the host Golgi or trans-Golgi network. The sequence is that of Nuclear egress protein 1 from Equus caballus (Horse).